The primary structure comprises 572 residues: Cuticlin-6 (572 aa).

An N-terminal signal peptide occupies residues 1 to 24 (MRPIPYDISLSITSFLSLILICSA). Over 25–541 (NPIDNGLVDS…PLPYPLINTN (517 aa)) the chain is Extracellular. The region spanning 47 to 216 (EVILLLDASG…QLDRALADSL (170 aa)) is the VWFA domain. N-linked (GlcNAc...) asparagine glycosylation occurs at Asn-78. One can recognise a ZP domain in the interval 233-479 (ICGPDRIGVK…GGCEGITPPQ (247 aa)). The helical transmembrane segment at 542–562 (LWIMGIITLTNIFVFILTVWF) threads the bilayer. The Cytoplasmic segment spans residues 563-572 (TFRKRRCKPA).

The protein resides in the cell membrane. Functionally, plays a role in alae formation in dauer larvae probably by regulating cuticle assembly. This chain is Cuticlin-6, found in Caenorhabditis elegans.